We begin with the raw amino-acid sequence, 239 residues long: Ribitol-5-phosphate cytidylyltransferase (239 aa).

CTP contacts are provided by residues 7 to 10 (FAGG) and 80 to 86 (GETGQMS).

The protein belongs to the IspD/TarI cytidylyltransferase family. TarI subfamily.

It carries out the reaction D-ribitol 5-phosphate + CTP + H(+) = CDP-L-ribitol + diphosphate. It functions in the pathway cell wall biogenesis; poly(ribitol phosphate) teichoic acid biosynthesis. In terms of biological role, catalyzes the transfer of the cytidylyl group of CTP to D-ribitol 5-phosphate. The protein is Ribitol-5-phosphate cytidylyltransferase of Streptococcus agalactiae serotype Ia (strain ATCC 27591 / A909 / CDC SS700).